Here is a 178-residue protein sequence, read N- to C-terminus: Large ribosomal subunit protein uL6 (178 aa).

The protein belongs to the universal ribosomal protein uL6 family. Part of the 50S ribosomal subunit.

Functionally, this protein binds to the 23S rRNA, and is important in its secondary structure. It is located near the subunit interface in the base of the L7/L12 stalk, and near the tRNA binding site of the peptidyltransferase center. The protein is Large ribosomal subunit protein uL6 of Lactococcus lactis subsp. cremoris (strain MG1363).